The primary structure comprises 443 residues: MEQKPEVDYSEKFAELQKSLNNLNTIDIDANLEKLLIFEKQVRQASDTSTNTKVLIYIADLLFRAGDFQGLNEQLVSLFKKHGQLKQSMTSLVQHVMTYLPGIDDLKTKINLIETLRTITDGKIYVEVERARLTQLLSQIKEEQGDIKSAQEILCNEPVETYGSFDLKEKVAFILDQVRLFLLRSDYYMASTYTKKINVKFFEKEDVQSLKLKYYEQKIRIGLHDDAYLDVCKYYRAVYDTAVVQEDPEKWKEILENVVCFALLTPYDNEQADLLHRINADHKLNSLPLLQQLVKCFIVNELMRWPKIAEIYGSALRSNPVFAENDEKGEKRWSELRKRVIEHNIRVVANYYSRIHCSRLGVLLDMSPSETEQFLCDLIAKHHFYAKIDRPAQVISFKKSQNVQEQLNEWGSNITELLGKLEKVRQLIIKEEMMNSIQQAVAK.

S209 is subject to Phosphoserine. One can recognise a PCI domain in the interval 230–402 (DVCKYYRAVY…QVISFKKSQN (173 aa)).

It belongs to the proteasome subunit p55 family.

The protein localises to the nucleus. Its function is as follows. Acts as a regulatory subunit of the 26S proteasome which is involved in the ATP-dependent degradation of ubiquitinated proteins. Required for proper proteasome assembly. In Schizosaccharomyces pombe (strain 972 / ATCC 24843) (Fission yeast), this protein is 26S proteasome regulatory subunit rpn501 (rpn501).